Consider the following 102-residue polypeptide: NADH-quinone oxidoreductase subunit K 1 (102 aa).

Transmembrane regions (helical) follow at residues 5-25 (LSHYLTVSAILFTLGVFGIFL), 31-51 (IVILMSVELILLAVNINMVAF), and 65-85 (LFILTVAAAEAAIGLAILVVF).

The protein belongs to the complex I subunit 4L family. NDH-1 is composed of 14 different subunits. Subunits NuoA, H, J, K, L, M, N constitute the membrane sector of the complex.

It is found in the cell inner membrane. The enzyme catalyses a quinone + NADH + 5 H(+)(in) = a quinol + NAD(+) + 4 H(+)(out). Functionally, NDH-1 shuttles electrons from NADH, via FMN and iron-sulfur (Fe-S) centers, to quinones in the respiratory chain. The immediate electron acceptor for the enzyme in this species is believed to be ubiquinone. Couples the redox reaction to proton translocation (for every two electrons transferred, four hydrogen ions are translocated across the cytoplasmic membrane), and thus conserves the redox energy in a proton gradient. In Rhizobium etli (strain ATCC 51251 / DSM 11541 / JCM 21823 / NBRC 15573 / CFN 42), this protein is NADH-quinone oxidoreductase subunit K 1.